The following is a 67-amino-acid chain: Beta-defensin 14 (67 aa).

A signal peptide spans 1-22 (MRLHYLLFVFLILFLVPAPGDA). Disulfide bonds link Cys33–Cys62, Cys40–Cys55, and Cys45–Cys63.

This sequence belongs to the beta-defensin family.

It localises to the secreted. In terms of biological role, has antibacterial activity. In Mus musculus (Mouse), this protein is Beta-defensin 14 (Defb14).